The chain runs to 601 residues: Polypeptide N-acetylgalactosaminyltransferase 11 (601 aa).

At 1–7 (MGSAALR) the chain is on the cytoplasmic side. A helical; Signal-anchor for type II membrane protein membrane pass occupies residues 8–28 (CFCYGCLFTSVTWTLLLFIYF). Asn-29 and Asn-202 each carry an N-linked (GlcNAc...) asparagine glycan. The Lumenal segment spans residues 29-601 (NFSEESQGFR…SPSQQWHLEN (573 aa)). The segment at 143–254 (LPMASIVICF…EMWLQPLLAP (112 aa)) is catalytic subdomain A. The interval 312–374 (PFRSPTMAGG…PCSRVGHIFR (63 aa)) is catalytic subdomain B. One can recognise a Ricin B-type lectin domain in the interval 469–600 (RPKILQRGRL…GSPSQQWHLE (132 aa)). A disulfide bridge links Cys-486 with Cys-505. N-linked (GlcNAc...) asparagine glycosylation occurs at Asn-508. Intrachain disulfides connect Cys-529–Cys-546 and Cys-571–Cys-589.

The protein belongs to the glycosyltransferase 2 family. GalNAc-T subfamily. In terms of assembly, interacts with notch1. It depends on Mn(2+) as a cofactor. Requires Ca(2+) as cofactor.

It localises to the golgi apparatus membrane. It catalyses the reaction L-seryl-[protein] + UDP-N-acetyl-alpha-D-galactosamine = a 3-O-[N-acetyl-alpha-D-galactosaminyl]-L-seryl-[protein] + UDP + H(+). It carries out the reaction L-threonyl-[protein] + UDP-N-acetyl-alpha-D-galactosamine = a 3-O-[N-acetyl-alpha-D-galactosaminyl]-L-threonyl-[protein] + UDP + H(+). The protein operates within protein modification; protein glycosylation. Its function is as follows. Polypeptide N-acetylgalactosaminyltransferase that catalyzes the initiation of protein O-linked glycosylation and is involved in left/right asymmetry by mediating O-glycosylation of NOTCH1. O-glycosylation of NOTCH1 promotes activation of NOTCH1, modulating the balance between motile and immotile (sensory) cilia at the left-right organiser (LRO). Polypeptide N-acetylgalactosaminyltransferases catalyze the transfer of an N-acetyl-D-galactosamine residue to a serine or threonine residue on the protein receptor. In Xenopus tropicalis (Western clawed frog), this protein is Polypeptide N-acetylgalactosaminyltransferase 11 (galnt11).